The sequence spans 442 residues: uncharacterized protein (442 aa).

Transmembrane regions (helical) follow at residues 209 to 229, 247 to 267, 284 to 304, 308 to 328, 342 to 362, 374 to 394, and 402 to 422; these read FNIW…AYFY, IFFL…HTFS, VGIS…AFVC, LRFI…YTPW, IFFF…MFYI, PVFK…LHIP, and FDII…GVAF.

It localises to the membrane. This is an uncharacterized protein from Schizosaccharomyces pombe (strain 972 / ATCC 24843) (Fission yeast).